Here is a 345-residue protein sequence, read N- to C-terminus: Ubiquitin-associated domain-containing protein 2 (345 aa).

The first 39 residues, 1 to 39 (MFTSTGSSGLYKAPLSKSLLLVPSALSLLLTLLLPHCQK), serve as a signal peptide directing secretion. The Extracellular portion of the chain corresponds to 40 to 91 (FFVYDLHAVKHDLQIWRLICGRIICLDLKDAFCSGLLIYNFRIFERRYGSRK). The chain crosses the membrane as a helical span at residues 92–112 (FASFLLGSWVLSALFDFILVE). The Cytoplasmic portion of the chain corresponds to 113-125 (AVQYSLGVTVASN). The chain crosses the membrane as a helical span at residues 126 to 146 (LPSGFLAPVFALFVPFHCSIP). At 147 to 163 (RVQVAQILGPLSITNKT) the chain is on the extracellular side. N-linked (GlcNAc...) asparagine glycosylation occurs at N161. A helical transmembrane segment spans residues 164-184 (LIYILGLQLFTSGSYIWIVAM). The Cytoplasmic portion of the chain corresponds to 185 to 345 (SGLISGMCYD…NVATNFLLQH (161 aa)). The disordered stretch occupies residues 287–306 (NINYQDGPRSEQRASPPLEV). Residues 305–345 (EVSEEQVARLMEMGFSRGDALEALRASNNDLNVATNFLLQH) form the UBA domain.

Interacts with LMBR1L, FAF2, AMFR and VCP.

It localises to the endoplasmic reticulum membrane. Its function is as follows. Restricts trafficking of FAF2 from the endoplasmic reticulum to lipid droplets. In association with LMBR1L and E3 ubiquitin-protein ligase AMFR, negatively regulates the canonical Wnt signaling pathway in the lymphocytes by promoting the ubiquitin-mediated degradation of CTNNB1 and Wnt receptors FZD6 and LRP6. In Mus musculus (Mouse), this protein is Ubiquitin-associated domain-containing protein 2 (Ubac2).